The primary structure comprises 184 residues: Latex serine proteinase inhibitor (184 aa).

A disulfide bridge links Cys-45 with Cys-89. N-linked (GlcNAc...) asparagine glycosylation is found at Asn-84 and Asn-90. Cys-142 and Cys-153 form a disulfide bridge.

It belongs to the protease inhibitor I3 (leguminous Kunitz-type inhibitor) family.

Its subcellular location is the secreted. It is found in the extracellular space. This is Latex serine proteinase inhibitor from Carica papaya (Papaya).